We begin with the raw amino-acid sequence, 114 residues long: Putative small ubiquitin-related modifier 4 (114 aa).

The interval 1–20 is disordered; that stretch reads MSTTSRVGSNEVKMEGQKRK. One can recognise a Ubiquitin-like domain in the interval 26 to 104; it reads THVTLKVKGQ…IDAMLCQQSG (79 aa). Residue Gly104 forms a Glycyl lysine isopeptide (Gly-Lys) (interchain with K-? in acceptor proteins) linkage.

Belongs to the ubiquitin family. SUMO subfamily. Interacts with SAE2, SCE1, SIZ1 and MMS21 Covalently attached to a number of proteins.

The protein localises to the nucleus. It is found in the cytoplasm. Ubiquitin-like protein which can be covalently attached to target lysines as a monomer. Does not seem to be involved in protein degradation and may function as an antagonist of ubiquitin in the degradation process. This Arabidopsis thaliana (Mouse-ear cress) protein is Putative small ubiquitin-related modifier 4 (SUMO4).